Reading from the N-terminus, the 500-residue chain is 4-alpha-glucanotransferase (500 aa).

The protein belongs to the disproportionating enzyme family.

It localises to the cytoplasm. It carries out the reaction Transfers a segment of a (1-&gt;4)-alpha-D-glucan to a new position in an acceptor, which may be glucose or a (1-&gt;4)-alpha-D-glucan.. The sequence is that of 4-alpha-glucanotransferase (malQ) from Thermus thermophilus.